A 599-amino-acid polypeptide reads, in one-letter code: MKKSQKRISNVSEIKAQLKTVETKVHNGVFLFSGIMTIAELAQKINVSVNQIITYFFHQAKMYNLNHSLSEDEIAEICLEFGLDFKKEVQIDASNFMEEVSILDQDKDLSPRPPIITVMGHVDHGKTTLLDYIRKTNIAKNEKGGITQHTGAYQVVFQGHIINFIDTPGHEAFTQMRARGAKVTDIIVLVVAADDGVMPQTKEAINHAAAANVPIIVFVNKMDKPNKDVDRIKNELSALNIVTEEWGGSNIFVYGSALTGQGIDTLFSSILLLAEILELKANKNRYPIGTVIEAKLHHNKGTIATLMVQNGTLMVRDFIVAGYQYGRIRSLENTNGQPIKFAPPGTPVIVTGLNYVPEAGDKFFGFHEEKFAKQLALEKKQSEKISKTKVQTKQQTKEKTLNIIVKADVAGIAQALHSTIEKLASKQVHIHILHSGVGIVNKADILLAQTSNSIIYAFNLQIPAAIKAQAKQAQVEIREHTIIYKIVDEIKKQVRGMREIRYELQQIGTAKIIAKFWFSKVGSIAGCSVLSGKFVENCKIELWRNSKLIHSGKIESLQRDKNPVKEVQVGNEFGTHIYKFNDIEIGDELKAFLDVEIEE.

Positions 111–278 constitute a tr-type G domain; it reads PRPPIITVMG…SILLLAEILE (168 aa). Positions 120–127 are G1; the sequence is GHVDHGKT. 120–127 serves as a coordination point for GTP; the sequence is GHVDHGKT. The interval 145 to 149 is G2; it reads GITQH. A G3 region spans residues 166–169; sequence DTPG. GTP-binding positions include 166–170 and 220–223; these read DTPGH and NKMD. The tract at residues 220–223 is G4; the sequence is NKMD. The tract at residues 256-258 is G5; the sequence is SAL.

It belongs to the TRAFAC class translation factor GTPase superfamily. Classic translation factor GTPase family. IF-2 subfamily.

It is found in the cytoplasm. Functionally, one of the essential components for the initiation of protein synthesis. Protects formylmethionyl-tRNA from spontaneous hydrolysis and promotes its binding to the 30S ribosomal subunits. Also involved in the hydrolysis of GTP during the formation of the 70S ribosomal complex. The sequence is that of Translation initiation factor IF-2 from Mesomycoplasma hyopneumoniae (strain 7448) (Mycoplasma hyopneumoniae).